The chain runs to 380 residues: Phthiodiolone/phenolphthiodiolone dimycocerosates ketoreductase (380 aa).

It belongs to the mer family. Phthiodiolone/phenolphthiodiolone dimycocerosates ketoreductase subfamily.

Catalyzes the reduction of the keto moiety of phthiodiolone dimycocerosates (DIM B) and glycosylated phenolphthiodiolone dimycocerosates to form the intermediate compounds phthiotriol and glycosylated phenolphthiotriol dimycocerosates during phthiocerol dimycocerosates (DIM A) and glycosylated phenolphthiocerol dimycocerosates (PGL) biosynthesis. This Mycobacterium sp. (strain JLS) protein is Phthiodiolone/phenolphthiodiolone dimycocerosates ketoreductase.